We begin with the raw amino-acid sequence, 172 residues long: Translation initiation factor IF-3 (172 aa).

This sequence belongs to the IF-3 family. In terms of assembly, monomer.

Its subcellular location is the cytoplasm. IF-3 binds to the 30S ribosomal subunit and shifts the equilibrium between 70S ribosomes and their 50S and 30S subunits in favor of the free subunits, thus enhancing the availability of 30S subunits on which protein synthesis initiation begins. This Campylobacter jejuni subsp. doylei (strain ATCC BAA-1458 / RM4099 / 269.97) protein is Translation initiation factor IF-3.